A 114-amino-acid chain; its full sequence is MTNKTTNIQATGKYVRLSTAKTRRVLNQIKGKKYQEAILILEFMTYKPCKIIKKILESAGNNALNLKYEKQNLIIKQAFANDGPKLKRFQPRAQGRAFRIQKPTCHITINLSIN.

This sequence belongs to the universal ribosomal protein uL22 family. Part of the 50S ribosomal subunit.

It is found in the plastid. Its subcellular location is the chloroplast. This protein binds specifically to 23S rRNA. In terms of biological role, the globular domain of the protein is located near the polypeptide exit tunnel on the outside of the subunit, while an extended beta-hairpin is found that lines the wall of the exit tunnel in the center of the 70S ribosome. The polypeptide is Large ribosomal subunit protein uL22c (rpl22) (Gracilaria tenuistipitata var. liui (Red alga)).